A 529-amino-acid polypeptide reads, in one-letter code: Nucleolar protein 58 (529 aa).

The residue at position 34 (Thr34) is a Phosphothreonine. Ser109 is subject to Phosphoserine. The tract at residues 155–400 (ADKVDTMIVQ…LEARLRTLED (246 aa)) is sufficient for interaction with NOPCHAP1. Lys157 participates in a covalent cross-link: Glycyl lysine isopeptide (Lys-Gly) (interchain with G-Cter in SUMO2). Residues 282-400 (IAPNVTVMVG…LEARLRTLED (119 aa)) form the Nop domain. Phosphoserine is present on residues Ser304 and Ser351. Glycyl lysine isopeptide (Lys-Gly) (interchain with G-Cter in SUMO2) cross-links involve residues Lys353, Lys411, Lys415, Lys422, Lys426, Lys441, Lys444, and Lys465. Residues 409–529 (TGKALAKTEK…KKKKKRENED (121 aa)) form a disordered region. Residues 414–427 (AKTEKYEHKSEVKT) are compositionally biased toward basic and acidic residues. Lys467 participates in a covalent cross-link: Glycyl lysine isopeptide (Lys-Gly) (interchain with G-Cter in SUMO); alternate. Lys467 is covalently cross-linked (Glycyl lysine isopeptide (Lys-Gly) (interchain with G-Cter in SUMO1); alternate). Residue Lys467 forms a Glycyl lysine isopeptide (Lys-Gly) (interchain with G-Cter in SUMO2); alternate linkage. Over residues 469–481 (EEEEEEKVAEEEE) the composition is skewed to acidic residues. Ser483 bears the Phosphoserine mark. A Glycyl lysine isopeptide (Lys-Gly) (interchain with G-Cter in SUMO2) cross-link involves residue Lys485. Basic residues predominate over residues 485-495 (KKKKKRGKKKH). A Glycyl lysine isopeptide (Lys-Gly) (interchain with G-Cter in SUMO); alternate cross-link involves residue Lys497. Residue Lys497 forms a Glycyl lysine isopeptide (Lys-Gly) (interchain with G-Cter in SUMO2); alternate linkage. Ser502 and Ser514 each carry phosphoserine. Basic residues predominate over residues 517–529 (KKKKKKKKRENED).

It belongs to the NOP5/NOP56 family. In terms of assembly, core component of box C/D small nucleolar ribonucleoprotein (snoRNP) particles; the core proteins SNU13, NOP56, NOP58 and FBL or FBLL1 assemble stepwise onto the snoRNA. Interacts with NOLC1/Nopp140. Interacts with NOPCHAP1, NUFIP1, RUVBL1 and RUVBL2; NOPCHAP1 bridges the association of NOP58 with RUVBL1:RUVBL2 and NUFIP1. Interacts with PIH1D1. Part of the small subunit (SSU) processome, composed of more than 70 proteins and the RNA chaperone small nucleolar RNA (snoRNA) U3. In terms of processing, sumoylation is essential for high-affinity binding to snoRNAs. In terms of tissue distribution, ubiquitous.

Its subcellular location is the nucleus. It is found in the nucleolus. It localises to the nucleoplasm. Its function is as follows. Required for the biogenesis of box C/D snoRNAs such as U3, U8 and U14 snoRNAs. Part of the small subunit (SSU) processome, first precursor of the small eukaryotic ribosomal subunit. During the assembly of the SSU processome in the nucleolus, many ribosome biogenesis factors, an RNA chaperone and ribosomal proteins associate with the nascent pre-rRNA and work in concert to generate RNA folding, modifications, rearrangements and cleavage as well as targeted degradation of pre-ribosomal RNA by the RNA exosome. Core component of box C/D small nucleolar ribonucleoprotein (snoRNP) complexes that function in methylation of multiple sites on ribosomal RNAs (rRNAs) and messenger RNAs (mRNAs). The polypeptide is Nucleolar protein 58 (Homo sapiens (Human)).